Here is a 1323-residue protein sequence, read N- to C-terminus: uncharacterized protein (1323 aa).

The span at 1–11 shows a compositional bias: basic and acidic residues; sequence MRELQGDDSSR. 2 disordered regions span residues 1-57 and 79-112; these read MREL…SSYY and IHESSTALSAQSNTAQDGDQLASSSTISKDHSET. Residues 12 to 21 are compositionally biased toward low complexity; sequence KSPPSDSVVK. The residue at position 24 (Ser-24) is a Phosphoserine. A compositionally biased stretch (basic and acidic residues) spans 27–40; the sequence is DYEHSLKSLQDERT. Composition is skewed to polar residues over residues 42-57 and 80-105; these read NYPNKQFNSENPSSYY and HESSTALSAQSNTAQDGDQLASSSTI. WD repeat units lie at residues 271-314, 320-360, 364-403, 409-449, 453-494, and 502-551; these read RHST…DRAI, GHTR…FPVN, DWHNGATQVKWNYKNPHILASSHGRLVRIWDDRYGSAPLH, ENIT…EEPE, TTDS…KEGP, and GHTD…LNSM. The RWD domain occupies 671 to 779; that stretch reads EELSWIGQKY…SYLSGNLSVD (109 aa). Over residues 879-888 the composition is skewed to polar residues; it reads SNSVADSDST. A disordered region spans residues 879-904; it reads SNSVADSDSTNYDDENSLNRGGTSES. The segment at 1265–1309 adopts an RING-type; degenerate zinc-finger fold; it reads CTFCCLSIHGLCIVCGLCLHVMHEDCYKEWFSNGDSISQSCSSGC.

It belongs to the WD repeat WDR59 family.

May be involved in telomere capping. This is an uncharacterized protein from Schizosaccharomyces pombe (strain 972 / ATCC 24843) (Fission yeast).